We begin with the raw amino-acid sequence, 106 residues long: MVNVPKTRKTYCKGKECRKHTQHKVTQYKAGKASLFAQGKRRYDRKQSGYGGQTKQIFHKKAKTTKKVVLRLECVVCKTKAQLPLKRCKHFELGGDKKQKGQALQF.

Positions 12, 17, 74, and 77 each coordinate Zn(2+).

This sequence belongs to the eukaryotic ribosomal protein eL42 family. As to quaternary structure, component of the large ribosomal subunit. Mature ribosomes consist of a small (40S) and a large (60S) subunit. The 40S subunit contains about 32 different proteins and 1 molecule of RNA (18S). The 60S subunit contains 45 different proteins and 3 molecules of RNA (25S, 5.8S and 5S). Zn(2+) serves as cofactor.

It localises to the cytoplasm. Functionally, component of the ribosome, a large ribonucleoprotein complex responsible for the synthesis of proteins in the cell. The small ribosomal subunit (SSU) binds messenger RNAs (mRNAs) and translates the encoded message by selecting cognate aminoacyl-transfer RNA (tRNA) molecules. The large subunit (LSU) contains the ribosomal catalytic site termed the peptidyl transferase center (PTC), which catalyzes the formation of peptide bonds, thereby polymerizing the amino acids delivered by tRNAs into a polypeptide chain. The nascent polypeptides leave the ribosome through a tunnel in the LSU and interact with protein factors that function in enzymatic processing, targeting, and the membrane insertion of nascent chains at the exit of the ribosomal tunnel. The chain is Large ribosomal subunit protein eL42 (RPL44) from Candida albicans (strain SC5314 / ATCC MYA-2876) (Yeast).